The following is a 120-amino-acid chain: NAD(P)H-quinone oxidoreductase subunit 3, chloroplastic (120 aa).

The next 3 membrane-spanning stretches (helical) occupy residues 9–29 (IFWA…LISG), 64–84 (MFAL…PWAM), and 88–108 (VLGV…IVGS).

This sequence belongs to the complex I subunit 3 family. As to quaternary structure, NDH is composed of at least 16 different subunits, 5 of which are encoded in the nucleus.

The protein localises to the plastid. The protein resides in the chloroplast thylakoid membrane. It carries out the reaction a plastoquinone + NADH + (n+1) H(+)(in) = a plastoquinol + NAD(+) + n H(+)(out). The catalysed reaction is a plastoquinone + NADPH + (n+1) H(+)(in) = a plastoquinol + NADP(+) + n H(+)(out). In terms of biological role, NDH shuttles electrons from NAD(P)H:plastoquinone, via FMN and iron-sulfur (Fe-S) centers, to quinones in the photosynthetic chain and possibly in a chloroplast respiratory chain. The immediate electron acceptor for the enzyme in this species is believed to be plastoquinone. Couples the redox reaction to proton translocation, and thus conserves the redox energy in a proton gradient. The chain is NAD(P)H-quinone oxidoreductase subunit 3, chloroplastic from Illicium oligandrum (Star anise).